The following is a 484-amino-acid chain: MKFIVKLYPEIMMKSKSVRMRFTKMLETNIRNVLKNVDEGAKVQRLYDRIIVQVPSDKPELCDVFADRLACIPGIAHVVQVSEYSFDSIDHIYQQALPKYRDEIAGKTFCVRVKRSGNHDFNSIDVERYVGGGLNQHTEALGVKLKDPDVTVNLEINQDKLYMVERRIQGLGGFPMATQEDVLSLISGGFDSGVSSFQFIKKGARTHYCFFNLGGAQHEIGVKQVAYHLWKKYGESHKVRFVSVPFEPVVEEILERIDNGQMGVVLKRVMMRAATRIADKYGIQALVTGESLGQVSSQTLTNLNVIDRSTDLLILRPLIAMDKQDIINQSRIIGTEDFAKSIPEYCGVISQKPTVKAVLSKVEAEELKFSEDLIDRVVASAVVMDIRDIEAEMNQQVTETETVKDVASGEIIIDVRAPEEEERSPLLIDNVMVKAIPFFKLATQFADLDKSKTYLLYCDRGVMSKLQALYLVEQGYTNVKVYRP.

Positions 63–167 (DVFADRLACI…QDKLYMVERR (105 aa)) constitute a THUMP domain. ATP is bound by residues 185 to 186 (LI), lysine 267, glycine 289, and glutamine 298. Cysteines 346 and 458 form a disulfide. The 79-residue stretch at 406–484 (VASGEIIIDV…GYTNVKVYRP (79 aa)) folds into the Rhodanese domain. Residue cysteine 458 is the Cysteine persulfide intermediate of the active site.

The protein belongs to the ThiI family.

It localises to the cytoplasm. It catalyses the reaction [ThiI sulfur-carrier protein]-S-sulfanyl-L-cysteine + a uridine in tRNA + 2 reduced [2Fe-2S]-[ferredoxin] + ATP + H(+) = [ThiI sulfur-carrier protein]-L-cysteine + a 4-thiouridine in tRNA + 2 oxidized [2Fe-2S]-[ferredoxin] + AMP + diphosphate. It carries out the reaction [ThiS sulfur-carrier protein]-C-terminal Gly-Gly-AMP + S-sulfanyl-L-cysteinyl-[cysteine desulfurase] + AH2 = [ThiS sulfur-carrier protein]-C-terminal-Gly-aminoethanethioate + L-cysteinyl-[cysteine desulfurase] + A + AMP + 2 H(+). It functions in the pathway cofactor biosynthesis; thiamine diphosphate biosynthesis. Functionally, catalyzes the ATP-dependent transfer of a sulfur to tRNA to produce 4-thiouridine in position 8 of tRNAs, which functions as a near-UV photosensor. Also catalyzes the transfer of sulfur to the sulfur carrier protein ThiS, forming ThiS-thiocarboxylate. This is a step in the synthesis of thiazole, in the thiamine biosynthesis pathway. The sulfur is donated as persulfide by IscS. In Shewanella frigidimarina (strain NCIMB 400), this protein is tRNA sulfurtransferase.